We begin with the raw amino-acid sequence, 130 residues long: uncharacterized protein (130 aa).

2 consecutive transmembrane segments (helical) span residues 35-57 (FLIT…FISL) and 72-91 (IVFF…LLLL).

It is found in the cell membrane. This is an uncharacterized protein from Pasteurella multocida (strain Pm70).